The chain runs to 275 residues: C-type lectin domain family 12 member B (275 aa).

Over 1–41 the chain is Cytoplasmic; sequence MSDEVTYATLMLQDSARVRGNQDGNNLRKEGHPAQSSLWRG. The ITIM motif signature appears at 5–10; it reads VTYATL. Phosphotyrosine is present on Tyr7. The helical; Signal-anchor for type II membrane protein transmembrane segment at 42 to 64 threads the bilayer; that stretch reads AALSLMTLCLVLVTGLVTLATMF. Residues 65–275 lie on the Extracellular side of the membrane; the sequence is LQVSNDINSD…ASLVKTEDLD (211 aa). N-linked (GlcNAc...) asparagine glycans are attached at residues Asn91, Asn175, and Asn236. The C-type lectin domain maps to 149–263; it reads YGNSCYYFSI…CSAEIPWICE (115 aa). Cystine bridges form between Cys171–Cys262 and Cys241–Cys254.

In terms of assembly, homodimer. Interacts (via ITIM motif) with PTPN6. Interacts (via ITIM motif) with PTPN11; this interaction triggers dephosphorylation and activation of PTPN11.

It is found in the cell membrane. In terms of biological role, inhibitory receptor postulated to negatively regulate immune and non-immune functions. Upon phosphorylation, recruits SH2 domain-containing PTPN6 and PTPN11 phosphatases to its ITIM motif and antagonizes activation signals. Although it inhibits KLRK1/NKG2D-mediated signaling, it does not bind known ligands of KLRK1/NKG2D and therefore is not its inhibitory counterpart. May limit activation of myeloid cell subsets in response to infection or tissue inflammation. May protect target cells against natural killer cell-mediated lysis. May negatively regulate cell cycle and differentiation of melanocytes via inactivation of STAT3. This Mus musculus (Mouse) protein is C-type lectin domain family 12 member B (Clec12b).